A 380-amino-acid polypeptide reads, in one-letter code: MSLNVFWFLPTHGDGRYLGSTEGARHVDYGYLQQVAQAAERQGFGGVLLPTGRSCEDSWLVAASLIPVTQRLKFLVALRPGVISPTIAARQAATLDRLSNGRALFNLVTGGDPEELAAEGLFLSHEERYEASAEFTHIWRRLLEGETVDFAGKHIQVKDAKLLYPPVQQPRPPLYFGGSSEAAQNLAAEQVDLYLTWGEPPEQVKEKLAEVRDKAAAQGREVRFGIRLHVIVRETTEEAWQAADRLISHLDEKTIADAQAALARFDSVGQQRMAALHGGKKDKLEISPNLWAGIGLVRGGAGTALVGDGPTVAERIQEYADLGIDTFILSGYPHLEEAYRVGELLFPHLDLAQQPTPLHAVNNAGEVVANRYVPRKVSQS.

The protein belongs to the SsuD family. As to quaternary structure, homotetramer.

The catalysed reaction is an alkanesulfonate + FMNH2 + O2 = an aldehyde + FMN + sulfite + H2O + 2 H(+). Its function is as follows. Catalyzes the desulfonation of aliphatic sulfonates. In Pectobacterium carotovorum subsp. carotovorum (strain PC1), this protein is Alkanesulfonate monooxygenase.